We begin with the raw amino-acid sequence, 123 residues long: Ribosome-binding factor A (123 aa).

Belongs to the RbfA family. As to quaternary structure, monomer. Binds 30S ribosomal subunits, but not 50S ribosomal subunits or 70S ribosomes.

It is found in the cytoplasm. In terms of biological role, one of several proteins that assist in the late maturation steps of the functional core of the 30S ribosomal subunit. Associates with free 30S ribosomal subunits (but not with 30S subunits that are part of 70S ribosomes or polysomes). Required for efficient processing of 16S rRNA. May interact with the 5'-terminal helix region of 16S rRNA. The polypeptide is Ribosome-binding factor A (Ralstonia nicotianae (strain ATCC BAA-1114 / GMI1000) (Ralstonia solanacearum)).